The sequence spans 473 residues: UDP-N-acetylmuramoylalanine--D-glutamate ligase (473 aa).

120 to 126 (GSNGKTT) lines the ATP pocket.

This sequence belongs to the MurCDEF family.

It localises to the cytoplasm. The catalysed reaction is UDP-N-acetyl-alpha-D-muramoyl-L-alanine + D-glutamate + ATP = UDP-N-acetyl-alpha-D-muramoyl-L-alanyl-D-glutamate + ADP + phosphate + H(+). It participates in cell wall biogenesis; peptidoglycan biosynthesis. Functionally, cell wall formation. Catalyzes the addition of glutamate to the nucleotide precursor UDP-N-acetylmuramoyl-L-alanine (UMA). This Nitrosospira multiformis (strain ATCC 25196 / NCIMB 11849 / C 71) protein is UDP-N-acetylmuramoylalanine--D-glutamate ligase.